Here is a 312-residue protein sequence, read N- to C-terminus: Olfactory receptor 6N1 (312 aa).

Residues 1 to 25 lie on the Extracellular side of the membrane; that stretch reads MDTGNWSQVAEFIILGFPHLQGVQI. Asparagine 5 carries N-linked (GlcNAc...) asparagine glycosylation. Residues 26 to 46 form a helical membrane-spanning segment; sequence YLFLLLLLIYLMTVLGNLLIF. Residues 47–54 lie on the Cytoplasmic side of the membrane; the sequence is LVVCLDSR. The helical transmembrane segment at 55-75 threads the bilayer; it reads LHTPMYHFVSILSFSELGYTA. Residues 76–99 are Extracellular-facing; that stretch reads ATIPKMLANLLSEKKTISFSGCLL. The cysteines at positions 97 and 189 are disulfide-linked. The helical transmembrane segment at 100–120 threads the bilayer; that stretch reads QIYFFHSLGATECYLLTAMAY. Topologically, residues 121-139 are cytoplasmic; the sequence is DRYLAICRPLHYPTLMTPT. The chain crosses the membrane as a helical span at residues 140–160; that stretch reads LCAEIAIGCWLGGLAGPVVEI. Over 161 to 197 the chain is Extracellular; the sequence is SLISRLPFCGPNRIQHVFCDFPPVLSLACTDTSINVL. The chain crosses the membrane as a helical span at residues 198–217; that stretch reads VDFVINSCKILATFLLILCS. Residues 218–237 lie on the Cytoplasmic side of the membrane; sequence YVQIICTVLRIPSAAGKRKA. The helical transmembrane segment at 238-258 threads the bilayer; the sequence is ISTCASHFTVVLIFYGSILSM. Residues 259–271 lie on the Extracellular side of the membrane; that stretch reads YVQLKKSYSLDYD. A helical transmembrane segment spans residues 272 to 292; that stretch reads QALAVVYSVLTPFLNPFIYSL. At 293–312 the chain is on the cytoplasmic side; the sequence is RNKEIKEAVRRQLKRIGILA.

This sequence belongs to the G-protein coupled receptor 1 family.

The protein localises to the cell membrane. In terms of biological role, odorant receptor. The sequence is that of Olfactory receptor 6N1 (OR6N1) from Homo sapiens (Human).